A 194-amino-acid chain; its full sequence is Holliday junction branch migration complex subunit RuvA (194 aa).

A domain I region spans residues 1–63; it reads MFEYMKGMIV…EDEAHLYGFV (63 aa). Positions 64-142 are domain II; the sequence is DKEELAMFKK…DSQVEYDQNF (79 aa). The tract at residues 143 to 146 is flexible linker; sequence FNHE. The tract at residues 146–194 is domain III; it reads ENKNNNEVVDALMALGYTKHEGEQAASAVRDTSLSTEEMIRKALNWLAR.

Belongs to the RuvA family. Homotetramer. Forms an RuvA(8)-RuvB(12)-Holliday junction (HJ) complex. HJ DNA is sandwiched between 2 RuvA tetramers; dsDNA enters through RuvA and exits via RuvB. An RuvB hexamer assembles on each DNA strand where it exits the tetramer. Each RuvB hexamer is contacted by two RuvA subunits (via domain III) on 2 adjacent RuvB subunits; this complex drives branch migration. In the full resolvosome a probable DNA-RuvA(4)-RuvB(12)-RuvC(2) complex forms which resolves the HJ.

It is found in the cytoplasm. Functionally, the RuvA-RuvB-RuvC complex processes Holliday junction (HJ) DNA during genetic recombination and DNA repair, while the RuvA-RuvB complex plays an important role in the rescue of blocked DNA replication forks via replication fork reversal (RFR). RuvA specifically binds to HJ cruciform DNA, conferring on it an open structure. The RuvB hexamer acts as an ATP-dependent pump, pulling dsDNA into and through the RuvAB complex. HJ branch migration allows RuvC to scan DNA until it finds its consensus sequence, where it cleaves and resolves the cruciform DNA. This is Holliday junction branch migration complex subunit RuvA from Alkaliphilus metalliredigens (strain QYMF).